The sequence spans 1277 residues: NPC intracellular cholesterol transporter 1 (1277 aa).

The first 22 residues, methionine 1–serine 22, serve as a signal peptide directing secretion. The Lumenal portion of the chain corresponds to glutamine 23–tyrosine 269. Intrachain disulfides connect cysteine 25/cysteine 74, cysteine 31/cysteine 42, cysteine 63/cysteine 109, cysteine 75/cysteine 113, cysteine 97/cysteine 238, cysteine 100/cysteine 160, cysteine 177/cysteine 184, cysteine 227/cysteine 243, and cysteine 240/cysteine 247. Residue asparagine 41 participates in cholesterol binding. Residue asparagine 70 is glycosylated (N-linked (GlcNAc...) asparagine). Glutamine 79 contacts cholesterol. N-linked (GlcNAc...) asparagine glycosylation is found at asparagine 122 and asparagine 137. Residues leucine 175 to isoleucine 205 are important for cholesterol binding and cholesterol transfer from NPC1 to liposomes. N-linked (GlcNAc...) asparagine glycans are attached at residues asparagine 185, asparagine 222, and asparagine 228. The chain crosses the membrane as a helical span at residues valine 270–valine 290. The Cytoplasmic portion of the chain corresponds to tryptophan 291–proline 350. Residues threonine 351–valine 371 traverse the membrane as a helical segment. Residues glutamine 372–valine 621 are Lumenal-facing. N-linked (GlcNAc...) asparagine glycosylation is found at asparagine 414, asparagine 459, asparagine 478, and asparagine 524. 2 disulfides stabilise this stretch: cysteine 468-cysteine 479 and cysteine 516-cysteine 533. One can recognise an SSD domain in the interval aspartate 620 to leucine 785. A helical membrane pass occupies residues phenylalanine 622–isoleucine 642. Topologically, residues glutamine 643–lysine 653 are cytoplasmic. A helical membrane pass occupies residues isoleucine 654–isoleucine 674. Residues phenylalanine 675–threonine 683 lie on the Lumenal side of the membrane. A helical transmembrane segment spans residues leucine 684–isoleucine 704. Over leucine 705 to glutamate 730 the chain is Cytoplasmic. Residues valine 731 to leucine 751 form a helical membrane-spanning segment. Over serine 752 to threonine 759 the chain is Lumenal. A helical transmembrane segment spans residues phenylalanine 760–valine 780. The Cytoplasmic segment spans residues serine 781–aspartate 832. Residues tryptophan 833–valine 853 form a helical membrane-spanning segment. Over asparagine 854–threonine 1097 the chain is Lumenal. N-linked (GlcNAc...) asparagine glycosylation is found at asparagine 868 and asparagine 898. Cysteine 909 and cysteine 914 form a disulfide bridge. N-linked (GlcNAc...) asparagine glycosylation is found at asparagine 916, asparagine 961, asparagine 968, and asparagine 1063. Disulfide bonds link cysteine 956–cysteine 1011, cysteine 957–cysteine 979, and cysteine 967–cysteine 976. Residues isoleucine 1098–cysteine 1118 traverse the membrane as a helical segment. Over glutamate 1119–alanine 1123 the chain is Cytoplasmic. A helical membrane pass occupies residues valine 1124–tryptophan 1144. Residue glycine 1145 is a topological domain, lumenal. A helical membrane pass occupies residues isoleucine 1146 to phenylalanine 1166. The Cytoplasmic segment spans residues cysteine 1167–glycine 1194. The chain crosses the membrane as a helical span at residues serine 1195 to alanine 1215. At lysine 1216–arginine 1226 the chain is on the lumenal side. The helical transmembrane segment at methionine 1227–leucine 1247 threads the bilayer. Residues serine 1248–phenylalanine 1277 lie on the Cytoplasmic side of the membrane. The required for location in lysosomes stretch occupies residues leucine 1274–phenylalanine 1277. Residues leucine 1274–phenylalanine 1277 carry the Di-leucine motif motif.

The protein belongs to the patched family. In terms of assembly, interacts (via the second lumenal domain) with NPC2. Interacts with TMEM97; the interaction may decrease NPC1 availability to the cell. Interacts with TIM1. Interacts with SLC38A9; this interaction inhibits cholesterol-mediated mTORC1 activation via its sterol transport activity. In terms of processing, N-glycosylated. In terms of tissue distribution, detected in liver (at protein level). Ubiquitous. Detected in adult heart, spleen, lung, liver, skeletal muscle, kidney, testis.

It localises to the late endosome membrane. Its subcellular location is the lysosome membrane. The enzyme catalyses cholesterol(in) = cholesterol(out). Functionally, intracellular cholesterol transporter which acts in concert with NPC2 and plays an important role in the egress of cholesterol from the endosomal/lysosomal compartment. Unesterified cholesterol that has been released from LDLs in the lumen of the late endosomes/lysosomes is transferred by NPC2 to the cholesterol-binding pocket in the N-terminal domain of NPC1. Cholesterol binds to NPC1 with the hydroxyl group buried in the binding pocket. May play a role in vesicular trafficking in glia, a process that may be crucial for maintaining the structural and functional integrity of nerve terminals. Inhibits cholesterol-mediated mTORC1 activation throught its interaction with SLC38A9. This is NPC intracellular cholesterol transporter 1 from Mus musculus (Mouse).